The following is a 92-amino-acid chain: Small ribosomal subunit protein uS19c (92 aa).

It belongs to the universal ribosomal protein uS19 family.

It is found in the plastid. Its subcellular location is the chloroplast. Its function is as follows. Protein S19 forms a complex with S13 that binds strongly to the 16S ribosomal RNA. The polypeptide is Small ribosomal subunit protein uS19c (Acorus calamus (Sweet flag)).